Consider the following 500-residue polypeptide: Cytochrome P450 monooxygenase 103 (500 aa).

The next 2 helical transmembrane spans lie at M1 to R21 and P26 to L46. N374 carries N-linked (GlcNAc...) asparagine glycosylation. Position 441 (C441) interacts with heme.

The protein belongs to the cytochrome P450 family. Requires heme as cofactor.

Its subcellular location is the membrane. It participates in secondary metabolite biosynthesis. Functionally, cytochrome P450 monooxygenase that is able to use testosterone as a substrate for oxidation. The chain is Cytochrome P450 monooxygenase 103 from Postia placenta (strain ATCC 44394 / Madison 698-R) (Brown rot fungus).